We begin with the raw amino-acid sequence, 333 residues long: 4-hydroxyproline epimerase (333 aa).

C90 serves as the catalytic Proton acceptor. Substrate-binding positions include 91 to 92 (GH) and D249. Residue C253 is the Proton donor of the active site. Residue 254–255 (GT) participates in substrate binding.

It belongs to the proline racemase family. Homodimer.

It carries out the reaction trans-4-hydroxy-L-proline = cis-4-hydroxy-D-proline. Allows intracellular utilization of 4-hydroxyproline, one of the major constituents of host collagen, by converting 4-hydroxy-L-proline to 4-hydroxy-D-proline, which can be further metabolized by intracellular 4-hydroxy-D-proline oxidases. Strong B-cell mitogen. Plays an important role in the regulation of intra- and extracellular amino acid pools, allowing the bacterium to profit from host precursors and enzymatic pathways. This is 4-hydroxyproline epimerase from Brucella abortus (strain S19).